A 434-amino-acid chain; its full sequence is Trigger factor (434 aa).

A PPIase FKBP-type domain is found at 161-246; the sequence is EDRATLDFTG…LKKVEVRELP (86 aa).

Belongs to the FKBP-type PPIase family. Tig subfamily.

The protein resides in the cytoplasm. The enzyme catalyses [protein]-peptidylproline (omega=180) = [protein]-peptidylproline (omega=0). Involved in protein export. Acts as a chaperone by maintaining the newly synthesized protein in an open conformation. Functions as a peptidyl-prolyl cis-trans isomerase. The protein is Trigger factor of Yersinia pseudotuberculosis serotype O:1b (strain IP 31758).